The following is a 173-amino-acid chain: CKLF-like MARVEL transmembrane domain-containing protein 8 (173 aa).

An MARVEL domain is found at 36–168 (FLRTLPGLLI…NTYFSFIAWR (133 aa)). The next 4 helical transmembrane spans lie at 40 to 60 (LPGL…TLIA), 70 to 90 (FGWV…FLII), 105 to 125 (TTVG…AAIV), and 147 to 167 (FFAF…FIAW).

This sequence belongs to the chemokine-like factor family.

Its subcellular location is the membrane. The chain is CKLF-like MARVEL transmembrane domain-containing protein 8 (CMTM8) from Bos taurus (Bovine).